The sequence spans 258 residues: MGTMGKAFYSVGFWIRETGQALDRLGCRLQGKNHFREQLSRHRTLMNVFDKTPNVDKGAFVAPNASLSGDVHVGRGSSIWYGCVLRGDANSISVGAGTNIQDNALVHVAKTNLSGKVLPTVIGDNVTIGHSAVLHGCTVEDEAYIGTSATVLDGAHVEKHAMVASGALVRQNTRIPSGEVWGGNPAKFLRKVTEEERVFFSSSAVEYSNLAQAHATENAKNLDEAEFKKLLNKKNARDTEYDSVLDDLTLPENVPKAA.

The N-terminal 43 residues, 1–43, are a transit peptide targeting the mitochondrion; sequence MGTMGKAFYSVGFWIRETGQALDRLGCRLQGKNHFREQLSRHR. Substrate contacts are provided by residues 86 to 88 and 101 to 102; these read RGD and QD. Zn(2+) contacts are provided by histidine 107, histidine 130, and histidine 135. Asparagine 209 provides a ligand contact to substrate.

This sequence belongs to the gamma-class carbonic anhydrase family. In terms of assembly, homotrimer. Component of the oxidoreductase respiratory chain complex I; element of the extra matrix-exposed domain, which is attached to the membrane arm of this complex. It depends on Zn(2+) as a cofactor.

It localises to the mitochondrion membrane. Functionally, enzyme involved in the catabolism of H(2)CO(3) but that does not mediates the reversible hydration of carbon dioxide. Mediates complex I assembly in mitochondria and respiration. This is Gamma carbonic anhydrase 3, mitochondrial (GAMMACA3) from Arabidopsis thaliana (Mouse-ear cress).